The primary structure comprises 105 residues: Transmembrane protein 273 (105 aa).

An N-terminal signal peptide occupies residues 1–19; it reads MNLGVSMLRILFLLDVGGA. Over 20–38 the chain is Extracellular; it reads QVLATGKTPGAEIDFKYAL. A helical transmembrane segment spans residues 39 to 59; that stretch reads IGTAVGVAISAGFLALKICMI. Residues 60-105 lie on the Cytoplasmic side of the membrane; that stretch reads RRHLFDDDSSDLKSTPGGLSDTIPLKKRAPRRNHNFSKRDAQVIEL.

Its subcellular location is the membrane. The polypeptide is Transmembrane protein 273 (Homo sapiens (Human)).